We begin with the raw amino-acid sequence, 342 residues long: Farnesyl pyrophosphate synthase 2 (342 aa).

Lys47, Arg50, and Gln86 together coordinate isopentenyl diphosphate. Positions 93 and 97 each coordinate Mg(2+). Arg102 provides a ligand contact to dimethylallyl diphosphate. Arg103 contacts isopentenyl diphosphate. Positions 190, 191, 229, 246, and 255 each coordinate dimethylallyl diphosphate.

The protein belongs to the FPP/GGPP synthase family. The cofactor is Mg(2+).

It localises to the cytoplasm. It carries out the reaction isopentenyl diphosphate + dimethylallyl diphosphate = (2E)-geranyl diphosphate + diphosphate. It catalyses the reaction isopentenyl diphosphate + (2E)-geranyl diphosphate = (2E,6E)-farnesyl diphosphate + diphosphate. It functions in the pathway isoprenoid biosynthesis; farnesyl diphosphate biosynthesis; farnesyl diphosphate from geranyl diphosphate and isopentenyl diphosphate: step 1/1. It participates in isoprenoid biosynthesis; geranyl diphosphate biosynthesis; geranyl diphosphate from dimethylallyl diphosphate and isopentenyl diphosphate: step 1/1. Catalyzes the sequential condensation of isopentenyl pyrophosphate with the allylic pyrophosphates, dimethylallyl pyrophosphate, and then with the resultant geranylpyrophosphate to the ultimate product farnesyl pyrophosphate. This is Farnesyl pyrophosphate synthase 2 (FPS2) from Arabidopsis thaliana (Mouse-ear cress).